Consider the following 477-residue polypeptide: tRNA-2-methylthio-N(6)-dimethylallyladenosine synthase (477 aa).

One can recognise an MTTase N-terminal domain in the interval 3–120; that stretch reads KKLHIKTWGC…LPAMIKQVQE (118 aa). 6 residues coordinate [4Fe-4S] cluster: cysteine 12, cysteine 49, cysteine 83, cysteine 157, cysteine 161, and cysteine 164. One can recognise a Radical SAM core domain in the interval 143–375; it reads RAEGATAFVS…QHVINNQSMQ (233 aa). Residues 378–441 form the TRAM domain; that stretch reads RAMLGSTQRI…PNSLRGRFIR (64 aa).

It belongs to the methylthiotransferase family. MiaB subfamily. Monomer. It depends on [4Fe-4S] cluster as a cofactor.

It localises to the cytoplasm. The enzyme catalyses N(6)-dimethylallyladenosine(37) in tRNA + (sulfur carrier)-SH + AH2 + 2 S-adenosyl-L-methionine = 2-methylsulfanyl-N(6)-dimethylallyladenosine(37) in tRNA + (sulfur carrier)-H + 5'-deoxyadenosine + L-methionine + A + S-adenosyl-L-homocysteine + 2 H(+). Catalyzes the methylthiolation of N6-(dimethylallyl)adenosine (i(6)A), leading to the formation of 2-methylthio-N6-(dimethylallyl)adenosine (ms(2)i(6)A) at position 37 in tRNAs that read codons beginning with uridine. The sequence is that of tRNA-2-methylthio-N(6)-dimethylallyladenosine synthase from Aeromonas salmonicida (strain A449).